A 687-amino-acid chain; its full sequence is MEEIVGLREGSPRKPVPLQELWRPCPRIRRNIQGSLEWLKERLFRVGEDWYFLVALGVLMALISYAMNFAIGRVVRAHKWLYREIGDGHLLRYLSWTVYPVALLSFSSGFSQSITPSSGGSGIPEVKTILTGVILEDYLDIKNFGAKVVGLSCTLATGSTIFLGKLGPFVHLSVMIAAYLGRVRTKTVGEPENKTKEMELLAAGAAVGVATVFAAPISGVLFSIEVMSSHFSVWDYWRGFFAATCGAFMFHLLAVFNSEQETITSIYKTSFPVDIPFDLPEIFFFVALGAICGILSCGYNYCQRTSLFFLKSNGFTSKLLATSKPLYSALAAVVLASITYPPGVGRFMASRLSMSEYLETLFDNNSWALMTKNSSPPWSAEPDPQNLWLEWCHPQMTVFGTLVFFLVMKFWMLILATTIPIPAGYFLPIFVYGAAIGRLFGEVLSLAFPEGIVAGGKVSPIMPGAYALAGAAAFSGAVTHTLSTALLAFEVSGQIVHALPVLMAVLAANAICQSYQPSFYDGTIIVKKLPYLPWIRGRKIGSHLVTVGHFMNCTLTTLAKDMPLEEVIKVVISTDVTQYPLVETTESQVLVGIVKRTHLVQSLHTDSASWAPGQQPCLQDILANGCPTQPVTLQLSTETSLHETHNLFELLNLQLLFVTSRGRAVGSVSWVELKKAISTLTNPPAPK.

Over 1 to 50 (MEEIVGLREGSPRKPVPLQELWRPCPRIRRNIQGSLEWLKERLFRVGEDW) the chain is Cytoplasmic. 2 consecutive transmembrane segments (helical) span residues 51-82 (YFLV…KWLY) and 91-111 (LRYL…SGFS). The segment at residues 116–127 (PSSGGSGIPEVK) is an intramembrane region (helical). Residue Ser121 coordinates chloride. A run of 2 helical transmembrane segments spans residues 141–160 (IKNF…TGST) and 161–180 (IFLG…AAYL). N-linked (GlcNAc...) asparagine glycosylation is present at Asn193. An intramembrane region (helical) is located at residues 203-224 (AGAAVGVATVFAAPISGVLFSI). Residues 236–255 (YWRGFFAATCGAFMFHLLAV) traverse the membrane as a helical segment. Residues Glu259, Glu261, Asp278, and Glu281 each contribute to the Ca(2+) site. Transmembrane regions (helical) follow at residues 282 to 310 (IFFF…LFFL) and 325 to 342 (PLYS…TYPP). The helical intramembrane region spans 349-360 (ASRLSMSEYLET). 2 helical membrane passes run 400–420 (GTLV…TTIP) and 421–440 (IPAG…GRLF). Residue Phe426 participates in chloride binding. Residues 464-496 (GAYALAGAAAFSGAVTHTLSTALLAFEVSGQIV) constitute an intramembrane region (helical). A helical membrane pass occupies residues 500 to 520 (PVLMAVLAANAICQSYQPSFY). The Cytoplasmic segment spans residues 521–687 (DGTIIVKKLP…STLTNPPAPK (167 aa)). CBS domains follow at residues 551–609 (MNCT…DSAS) and 626–687 (CPTQ…PAPK).

Belongs to the chloride channel (TC 2.A.49) family. CLCNKB subfamily. Homodimer. Interacts with BSND. N-glycosylated. As to expression, expressed predominantly in the kidney. Expressed in all segments of the nephron examined, including the S2 segment and the glomerulus.

It is found in the basolateral cell membrane. It catalyses the reaction chloride(in) = chloride(out). The catalysed reaction is iodide(out) = iodide(in). The enzyme catalyses nitrate(in) = nitrate(out). It carries out the reaction bromide(in) = bromide(out). Anion-selective channel permeable to small monovalent anions with ion selectivity for chloride &gt; bromide &gt; nitrate &gt; iodide. Forms a homodimeric channel where each subunit has its own ion conduction pathway. May conduct double-barreled currents controlled by two types of gates, two fast gates that control each subunit independently and a slow common gate that opens and shuts off both subunits simultaneously. Assembles with the regulatory subunit BSND/Barttin for sorting at the basolateral plasma membrane domain and functional switch to the ion conducting state. CLCNKB:BSND channels display mostly a linear current-voltage relationship controlled by common gate. Mediates chloride conductance along nephron segments, namely the thick ascending limb of Henle's loop, convoluted tubule and the collecting duct, contributing to the maintenance of systemic acid-base and electrolyte homeostasis. Conducts chloride currents in the stria vascularis of the inner ear to establish the endocochlear potential necessary for normal hearing. This chain is Chloride channel protein ClC-Kb, found in Rattus norvegicus (Rat).